A 78-amino-acid chain; its full sequence is MSKVCIVTGKRPAVGNNRSHAKNSTRRRFLPNLQTHRFWVESENRFVKLRLSAKGMRIIDKKGIDSVLTDIRANGVKI.

It belongs to the bacterial ribosomal protein bL28 family.

This chain is Large ribosomal subunit protein bL28, found in Pseudoalteromonas atlantica (strain T6c / ATCC BAA-1087).